A 369-amino-acid polypeptide reads, in one-letter code: Methylthioribose-1-phosphate isomerase (369 aa).

Met-1 carries the N-acetylmethionine modification. Omega-N-methylarginine is present on Arg-158. The active-site Proton donor is the Asp-248. At Ser-366 the chain carries Phosphoserine.

It belongs to the eIF-2B alpha/beta/delta subunits family. MtnA subfamily.

It is found in the cytoplasm. The protein resides in the nucleus. It carries out the reaction 5-(methylsulfanyl)-alpha-D-ribose 1-phosphate = 5-(methylsulfanyl)-D-ribulose 1-phosphate. It participates in amino-acid biosynthesis; L-methionine biosynthesis via salvage pathway; L-methionine from S-methyl-5-thio-alpha-D-ribose 1-phosphate: step 1/6. Catalyzes the interconversion of methylthioribose-1-phosphate (MTR-1-P) into methylthioribulose-1-phosphate (MTRu-1-P). This is Methylthioribose-1-phosphate isomerase (Mri1) from Mus musculus (Mouse).